A 143-amino-acid polypeptide reads, in one-letter code: Transcriptional regulator MraZ (143 aa).

SpoVT-AbrB domains are found at residues 5 to 47 and 76 to 119; these read EYNH…SSDE and ASEC…SNVE.

It belongs to the MraZ family. In terms of assembly, forms oligomers.

It localises to the cytoplasm. It is found in the nucleoid. This chain is Transcriptional regulator MraZ, found in Alkaliphilus oremlandii (strain OhILAs) (Clostridium oremlandii (strain OhILAs)).